A 193-amino-acid chain; its full sequence is MEHTLPPLPFDKNALAPHMSEETLEYHYGKHHQTYVTNLNKLIPGTEFENLSLEEIVKKSSGGVFNNSAQVWNHTFFWNSLSPKGGGAPTGALADAINAKYGSFDKFKEEFAKVATGTFGSGWTWLVKKTDGTVDIVSTSNAATPLTTDAKALLTIDVWEHAYYIDYRNARPKFIEAYWNIANWDFAAKNFGA.

4 residues coordinate Fe cation: His27, His74, Asp157, and His161.

This sequence belongs to the iron/manganese superoxide dismutase family. Monomer. Fe cation is required as a cofactor.

The enzyme catalyses 2 superoxide + 2 H(+) = H2O2 + O2. Functionally, destroys superoxide anion radicals which are normally produced within the cells and which are toxic to biological systems. Involved in the metabolism of 4-aminophenol. May have an indirect role in hydroxyquinol metabolism by scavenging and detoxifying reactive species that promote its auto-oxidation. The chain is Superoxide dismutase [Fe] from Burkholderia sp.